Reading from the N-terminus, the 472-residue chain is Probable dipeptidase A (472 aa).

Cys-10 is an active-site residue.

This sequence belongs to the peptidase C69 family.

It catalyses the reaction an L-aminoacyl-L-amino acid + H2O = 2 an L-alpha-amino acid. The polypeptide is Probable dipeptidase A (pepDA) (Streptococcus pyogenes serotype M18 (strain MGAS8232)).